Consider the following 433-residue polypeptide: Xylose isomerase (433 aa).

Active-site residues include His99 and Asp102. Mg(2+)-binding residues include Glu230, Glu266, His269, Asp294, Asp305, Asp307, and Asp337.

This sequence belongs to the xylose isomerase family. As to quaternary structure, homotetramer. Mg(2+) is required as a cofactor.

It localises to the cytoplasm. It carries out the reaction alpha-D-xylose = alpha-D-xylulofuranose. This is Xylose isomerase from Cereibacter sphaeroides (strain ATCC 17025 / ATH 2.4.3) (Rhodobacter sphaeroides).